A 180-amino-acid polypeptide reads, in one-letter code: Small ribosomal subunit protein uS5 (180 aa).

In terms of domain architecture, S5 DRBM spans 24–87 (MIEKLVAVNR…EQARKNLATV (64 aa)).

It belongs to the universal ribosomal protein uS5 family. As to quaternary structure, part of the 30S ribosomal subunit. Contacts proteins S4 and S8.

Functionally, with S4 and S12 plays an important role in translational accuracy. In terms of biological role, located at the back of the 30S subunit body where it stabilizes the conformation of the head with respect to the body. This is Small ribosomal subunit protein uS5 from Xanthomonas axonopodis pv. citri (strain 306).